Consider the following 520-residue polypeptide: Sodium-dependent dicarboxylate transporter SdcS (520 aa).

Helical transmembrane passes span 30-50 (AGQL…LLFF), 55-75 (LPWK…WWIT), 77-97 (AIPI…GHIL), 104-124 (SEYG…AIAM), 160-180 (SMFV…LAII), 207-227 (IGYA…PLII), 242-262 (FAKW…ITWL), 298-318 (KVVQ…EFLL), 323-343 (VTSS…LFVI), 362-382 (ELPW…KGIS), 399-419 (GVSP…LTEV), 428-448 (MILP…LLLM), 452-472 (AMAA…AIIF), and 491-511 (LISA…VLGI).

Belongs to the SLC13A/DASS transporter (TC 2.A.47) family. NADC subfamily.

It is found in the cell membrane. Mediates the transport of the dicarboxylates fumarate, malate, and succinate across the cytoplasmic membrane via a Na(+)-electrochemical gradient. This is Sodium-dependent dicarboxylate transporter SdcS (sdcS) from Staphylococcus aureus (strain MSSA476).